The chain runs to 167 residues: S-ribosylhomocysteine lyase (167 aa).

3 residues coordinate Fe cation: H54, H58, and C128.

Belongs to the LuxS family. Homodimer. Requires Fe cation as cofactor.

It carries out the reaction S-(5-deoxy-D-ribos-5-yl)-L-homocysteine = (S)-4,5-dihydroxypentane-2,3-dione + L-homocysteine. Functionally, involved in the synthesis of autoinducer 2 (AI-2) which is secreted by bacteria and is used to communicate both the cell density and the metabolic potential of the environment. The regulation of gene expression in response to changes in cell density is called quorum sensing. Catalyzes the transformation of S-ribosylhomocysteine (RHC) to homocysteine (HC) and 4,5-dihydroxy-2,3-pentadione (DPD). This Haemophilus influenzae (strain PittGG) protein is S-ribosylhomocysteine lyase.